Reading from the N-terminus, the 134-residue chain is Small ribosomal subunit protein bS6 (134 aa).

The interval 99-134 is disordered; the sequence is EPSAMMQKRDRDERKDRERGRRRDEDGFSGDRNEEN. Basic and acidic residues predominate over residues 105 to 134; it reads QKRDRDERKDRERGRRRDEDGFSGDRNEEN.

Belongs to the bacterial ribosomal protein bS6 family.

Functionally, binds together with bS18 to 16S ribosomal RNA. The polypeptide is Small ribosomal subunit protein bS6 (Methylobacterium nodulans (strain LMG 21967 / CNCM I-2342 / ORS 2060)).